The primary structure comprises 306 residues: Ornithine carbamoyltransferase (306 aa).

Carbamoyl phosphate contacts are provided by residues 53-56, Q80, R104, and 131-134; these read STRT and HPCQ. Residues N162, D220, and 224–225 each bind L-ornithine; that span reads SM. Carbamoyl phosphate contacts are provided by residues 260–261 and R288; that span reads CL.

The protein belongs to the aspartate/ornithine carbamoyltransferase superfamily. OTCase family.

The protein localises to the cytoplasm. The catalysed reaction is carbamoyl phosphate + L-ornithine = L-citrulline + phosphate + H(+). It functions in the pathway amino-acid biosynthesis; L-arginine biosynthesis; L-arginine from L-ornithine and carbamoyl phosphate: step 1/3. In terms of biological role, reversibly catalyzes the transfer of the carbamoyl group from carbamoyl phosphate (CP) to the N(epsilon) atom of ornithine (ORN) to produce L-citrulline. In Methylobacillus flagellatus (strain ATCC 51484 / DSM 6875 / VKM B-1610 / KT), this protein is Ornithine carbamoyltransferase.